Reading from the N-terminus, the 333-residue chain is Testin-2 (333 aa).

The signal sequence occupies residues Met-1–Thr-17. Intrachain disulfides connect Cys-135–Cys-178, Cys-169–Cys-211, and Cys-269–Cys-322. Asn-173 carries an N-linked (GlcNAc...) asparagine glycan. Residues His-276 and Asn-300 contribute to the active site.

It belongs to the peptidase C1 family. Sertoli cells.

It is found in the secreted. In Rattus norvegicus (Rat), this protein is Testin-2 (Testin).